We begin with the raw amino-acid sequence, 245 residues long: PF03932 family protein CutC (245 aa).

It belongs to the CutC family.

It is found in the cytoplasm. The polypeptide is PF03932 family protein CutC (Sinorhizobium medicae (strain WSM419) (Ensifer medicae)).